The following is a 386-amino-acid chain: Putative 8-amino-7-oxononanoate synthase (386 aa).

Residue Arg-22 coordinates substrate. 109–110 (GY) is a pyridoxal 5'-phosphate binding site. Substrate is bound at residue His-134. Residues Ser-182, 207 to 210 (DEAH), and 238 to 241 (TLSK) contribute to the pyridoxal 5'-phosphate site. The residue at position 241 (Lys-241) is an N6-(pyridoxal phosphate)lysine. Thr-356 contacts substrate.

It belongs to the class-II pyridoxal-phosphate-dependent aminotransferase family. BioF subfamily. In terms of assembly, homodimer. Pyridoxal 5'-phosphate is required as a cofactor.

It catalyses the reaction 6-carboxyhexanoyl-[ACP] + L-alanine + H(+) = (8S)-8-amino-7-oxononanoate + holo-[ACP] + CO2. Its pathway is cofactor biosynthesis; biotin biosynthesis. Its function is as follows. Catalyzes the decarboxylative condensation of pimeloyl-[acyl-carrier protein] and L-alanine to produce 8-amino-7-oxononanoate (AON), [acyl-carrier protein], and carbon dioxide. The sequence is that of Putative 8-amino-7-oxononanoate synthase (bioF) from Nostoc sp. (strain PCC 7120 / SAG 25.82 / UTEX 2576).